Consider the following 542-residue polypeptide: 4-coumarate--CoA ligase 2 (542 aa).

Residues serine 189, serine 190, glycine 191, threonine 192, threonine 193, and lysine 197 each contribute to the ATP site. 2 residues coordinate (E)-4-coumaroyl-AMP: tyrosine 239 and serine 243. The (E)-caffeoyl-AMP site is built by tyrosine 239 and serine 243. (E)-feruloyl-AMP contacts are provided by tyrosine 239 and serine 243. Residue lysine 260 participates in CoA binding. Residues aspartate 262–glutamine 331 are SBD1. A (E)-4-coumaroyl-AMP-binding site is contributed by alanine 309. Position 309 (alanine 309) interacts with (E)-caffeoyl-AMP. Alanine 309 serves as a coordination point for (E)-feruloyl-AMP. The ATP site is built by glutamine 331, glycine 332, and threonine 336. 7 residues coordinate (E)-4-coumaroyl-AMP: glycine 332, threonine 336, methionine 344, aspartate 420, arginine 435, lysine 437, and lysine 441. 7 residues coordinate (E)-caffeoyl-AMP: glycine 332, threonine 336, methionine 344, aspartate 420, arginine 435, lysine 437, and lysine 441. (E)-feruloyl-AMP contacts are provided by glycine 332, threonine 336, methionine 344, aspartate 420, arginine 435, lysine 437, and lysine 441. Residues glycine 332 and threonine 336 each coordinate AMP. The tract at residues glycine 332–tyrosine 399 is SBD2. ATP contacts are provided by aspartate 420 and arginine 435. Aspartate 420 is a binding site for AMP. AMP-binding residues include lysine 437 and lysine 441. The CoA site is built by lysine 443 and glycine 444. Residue glutamine 446 participates in AMP binding. Lysine 526 is an ATP binding site.

The protein belongs to the ATP-dependent AMP-binding enzyme family. The cofactor is Mg(2+). As to expression, mainly expressed in old stems and, to a lower extent, in flowers (e.g. in ovary), leaves, young stems, shoot tips and patel limbs.

The enzyme catalyses (E)-4-coumarate + ATP + CoA = (E)-4-coumaroyl-CoA + AMP + diphosphate. It carries out the reaction (E)-caffeate + ATP + CoA = (E)-caffeoyl-CoA + AMP + diphosphate. It catalyses the reaction (E)-ferulate + ATP + CoA = (E)-feruloyl-CoA + AMP + diphosphate. The catalysed reaction is (E)-cinnamate + ATP + CoA = (E)-cinnamoyl-CoA + AMP + diphosphate. The enzyme catalyses (E)-4-coumarate + ATP + H(+) = (E)-4-coumaroyl-AMP + diphosphate. It carries out the reaction (E)-4-coumaroyl-AMP + CoA = (E)-4-coumaroyl-CoA + AMP + H(+). It catalyses the reaction (E)-caffeate + ATP + H(+) = (E)-caffeoyl-AMP + diphosphate. The catalysed reaction is (E)-caffeoyl-AMP + CoA = (E)-caffeoyl-CoA + AMP + H(+). The enzyme catalyses (E)-ferulate + ATP + H(+) = (E)-feruloyl-AMP + diphosphate. It carries out the reaction (E)-feruloyl-AMP + CoA = (E)-feruloyl-CoA + AMP + H(+). It participates in phytoalexin biosynthesis; 3,4',5-trihydroxystilbene biosynthesis; 3,4',5-trihydroxystilbene from trans-4-coumarate: step 1/2. Functionally, major enzyme of the phenylpropanoid pathway that mediates the production of several precursors for numerous metabolites and regulates carbon flow. Catalyzes the formation of CoA thioesters using 4-coumarate, ferulate, caffeate, and cinnamate as substrates. Follows a two-step reaction mechanism, wherein a (hydroxy)cinnamate substrate first undergoes adenylation by ATP leading to an acyl-AMP, followed by a thioesterification in the presence of CoA to yield the final (hydroxy)cinnamoyl-CoA product. Almost inactive toward sinapate. The sequence is that of 4-coumarate--CoA ligase 2 from Nicotiana tabacum (Common tobacco).